Here is a 483-residue protein sequence, read N- to C-terminus: Myosin-binding protein H (483 aa).

The span at 1 to 15 (MTGKATSEASVSTPE) shows a compositional bias: polar residues. A disordered region spans residues 1–78 (MTGKATSEAS…PEPPSEDVPS (78 aa)). Residues Thr2, Thr6, and Thr26 each carry the phosphothreonine modification. A compositionally biased stretch (low complexity) spans 41–66 (QEQAPEPQKPQAQDPAAPAASAMPAA). Residues 79-174 (APLRLTLEDV…LDQPVHIQEI (96 aa)) form the Fibronectin type-III 1 domain. Residues 178–266 (PKIRVPRHLR…EGLEAKASID (89 aa)) enclose the Ig-like C2-type 1 domain. The 96-residue stretch at 275-370 (PPSSIKLLDV…TKELAHIHKA (96 aa)) folds into the Fibronectin type-III 2 domain. An Ig-like C2-type 2 domain is found at 388 to 472 (PSFTQPLADH…INVLGEASVD (85 aa)).

It belongs to the immunoglobulin superfamily. MyBP family. In terms of tissue distribution, skeletal muscle. Expressed at low levels in heart ventricles.

In terms of biological role, binds to myosin; probably involved in interaction with thick myofilaments in the A-band. The chain is Myosin-binding protein H (Mybph) from Mus musculus (Mouse).